The primary structure comprises 225 residues: Enolase-phosphatase E1 (225 aa).

This sequence belongs to the HAD-like hydrolase superfamily. MasA/MtnC family. Monomer. The cofactor is Mg(2+).

It catalyses the reaction 5-methylsulfanyl-2,3-dioxopentyl phosphate + H2O = 1,2-dihydroxy-5-(methylsulfanyl)pent-1-en-3-one + phosphate. It functions in the pathway amino-acid biosynthesis; L-methionine biosynthesis via salvage pathway; L-methionine from S-methyl-5-thio-alpha-D-ribose 1-phosphate: step 3/6. It participates in amino-acid biosynthesis; L-methionine biosynthesis via salvage pathway; L-methionine from S-methyl-5-thio-alpha-D-ribose 1-phosphate: step 4/6. Its function is as follows. Bifunctional enzyme that catalyzes the enolization of 2,3-diketo-5-methylthiopentyl-1-phosphate (DK-MTP-1-P) into the intermediate 2-hydroxy-3-keto-5-methylthiopentenyl-1-phosphate (HK-MTPenyl-1-P), which is then dephosphorylated to form the acireductone 1,2-dihydroxy-3-keto-5-methylthiopentene (DHK-MTPene). The chain is Enolase-phosphatase E1 from Pseudomonas aeruginosa (strain UCBPP-PA14).